A 210-amino-acid chain; its full sequence is Large ribosomal subunit protein uL15 (210 aa).

Disordered regions lie at residues 1–64 (MADD…AAPR) and 76–104 (AAGAKKEKTRVGRGEGSKGKTAGRGTKGT). Low complexity predominate over residues 9–54 (EAAAKPVAEKATATALAKKAPAKAAAADKAAPAAKGETVAAKPAKA). A compositionally biased stretch (basic and acidic residues) spans 79–93 (AKKEKTRVGRGEGSK).

It belongs to the universal ribosomal protein uL15 family. Part of the 50S ribosomal subunit.

Binds to the 23S rRNA. In Leifsonia xyli subsp. xyli (strain CTCB07), this protein is Large ribosomal subunit protein uL15.